The following is a 501-amino-acid chain: Zinc-binding lipoprotein AdcA (501 aa).

The N-terminal stretch at 1-18 (MKKISLLLASLCALFLVA) is a signal peptide. C19 carries the N-palmitoyl cysteine lipid modification. C19 is lipidated: S-diacylglycerol cysteine. Zn(2+) is bound at residue H63. Residues 116–136 (LPGGEEEEGDHDHGEEGHHHE) form a disordered region. A his-rich loop region spans residues 120–136 (EEEEGDHDHGEEGHHHE). The span at 125–136 (DHDHGEEGHHHE) shows a compositional bias: basic and acidic residues. Residues H140, H204, and E279 each contribute to the Zn(2+) site.

It belongs to the bacterial solute-binding protein 9 family.

The protein resides in the cell membrane. Part of the ATP-binding cassette (ABC) transport system AdcABC involved in zinc import. Binds zinc with high affinity and specificity and delivers it to the membrane permease for translocation into the cytoplasm. This chain is Zinc-binding lipoprotein AdcA (adcA), found in Streptococcus pneumoniae serotype 4 (strain ATCC BAA-334 / TIGR4).